The sequence spans 228 residues: Protein crossbronx homolog (228 aa).

Residues 14 to 168 (LQEYKILAEY…VEQCVEDSQR (155 aa)) form the UBC core domain.

It belongs to the ubiquitin-conjugating enzyme family. FTS subfamily.

This is Protein crossbronx homolog from Anopheles gambiae (African malaria mosquito).